A 270-amino-acid chain; its full sequence is UPF0354 protein BA_4944/GBAA_4944/BAS4588 (270 aa).

This sequence belongs to the UPF0354 family.

This is UPF0354 protein BA_4944/GBAA_4944/BAS4588 from Bacillus anthracis.